The following is a 498-amino-acid chain: ATP synthase subunit beta, chloroplastic (498 aa).

172-179 (GGAGVGKT) is an ATP binding site.

This sequence belongs to the ATPase alpha/beta chains family. As to quaternary structure, F-type ATPases have 2 components, CF(1) - the catalytic core - and CF(0) - the membrane proton channel. CF(1) has five subunits: alpha(3), beta(3), gamma(1), delta(1), epsilon(1). CF(0) has four main subunits: a(1), b(1), b'(1) and c(9-12).

It localises to the plastid. It is found in the chloroplast thylakoid membrane. It catalyses the reaction ATP + H2O + 4 H(+)(in) = ADP + phosphate + 5 H(+)(out). Produces ATP from ADP in the presence of a proton gradient across the membrane. The catalytic sites are hosted primarily by the beta subunits. The polypeptide is ATP synthase subunit beta, chloroplastic (Nicotiana rustica (Aztec tobacco)).